Consider the following 156-residue polypeptide: MNPRDIVEQVTALAEPVAEQLGLQLVAVAYQTHTKPATLRVDIRHPTEGTGLDDCEKMSRALEALLDTRDDLIIGAYNLEVSSPGVERVLTTDREFMAFRGFPVMVKTFGPVDGKKQWEGRLLERDGENVYLTIAGRRVALPRPQVARVQLVQSLP.

This sequence belongs to the RimP family.

It is found in the cytoplasm. Its function is as follows. Required for maturation of 30S ribosomal subunits. This chain is Ribosome maturation factor RimP, found in Gloeobacter violaceus (strain ATCC 29082 / PCC 7421).